An 86-amino-acid polypeptide reads, in one-letter code: MTVKVHVVYCGGUGYRPKFIKLKTLLEDEFPNELEITGEGTPSTTGWLEVEVNGKLVHSKKNGDGFVDSDSKMQKIMTAIEQAMGK.

The segment at residues 10-13 (CGGU) is a cross-link (cysteinyl-selenocysteine (Cys-Sec); redox-active). A non-standard amino acid (selenocysteine) is located at residue Sec13.

Belongs to the SelWTH family. Selenoprotein W subfamily.

The protein localises to the cytoplasm. Functionally, plays a role as a glutathione (GSH)-dependent antioxidant. May be involved in a redox-related process. May play a role in the myopathies of selenium deficiency. This Danio rerio (Zebrafish) protein is Selenoprotein W.